The chain runs to 84 residues: MVKLRLKRYGRKKRPFYRVIAIDSRCRRDGKALKELGFYDPIAGKTQLDVPNIIFYLKAGAQTSETVGNLLQKAKVFNQLSLLN.

Belongs to the bacterial ribosomal protein bS16 family.

It localises to the plastid. It is found in the chloroplast. This chain is Small ribosomal subunit protein bS16c, found in Mesostigma viride (Green alga).